The following is a 386-amino-acid chain: Formate-dependent phosphoribosylglycinamide formyltransferase (386 aa).

Residues 15 to 16 (EL) and glutamate 75 each bind N(1)-(5-phospho-beta-D-ribosyl)glycinamide. ATP contacts are provided by residues arginine 107, lysine 148, 153-158 (SSGKGQ), 188-191 (EQFI), and glutamate 196. Positions 112-301 (ALAAQQLNLQ…EFELHLRAIV (190 aa)) constitute an ATP-grasp domain. 2 residues coordinate Mg(2+): glutamate 260 and glutamate 272. N(1)-(5-phospho-beta-D-ribosyl)glycinamide-binding positions include aspartate 279, lysine 349, and 356–357 (RR).

It belongs to the PurK/PurT family. Homodimer.

It carries out the reaction N(1)-(5-phospho-beta-D-ribosyl)glycinamide + formate + ATP = N(2)-formyl-N(1)-(5-phospho-beta-D-ribosyl)glycinamide + ADP + phosphate + H(+). Its pathway is purine metabolism; IMP biosynthesis via de novo pathway; N(2)-formyl-N(1)-(5-phospho-D-ribosyl)glycinamide from N(1)-(5-phospho-D-ribosyl)glycinamide (formate route): step 1/1. Its function is as follows. Involved in the de novo purine biosynthesis. Catalyzes the transfer of formate to 5-phospho-ribosyl-glycinamide (GAR), producing 5-phospho-ribosyl-N-formylglycinamide (FGAR). Formate is provided by PurU via hydrolysis of 10-formyl-tetrahydrofolate. The polypeptide is Formate-dependent phosphoribosylglycinamide formyltransferase (Francisella tularensis subsp. tularensis (strain WY96-3418)).